A 199-amino-acid polypeptide reads, in one-letter code: ATP-dependent Clp protease proteolytic subunit (199 aa).

S97 acts as the Nucleophile in catalysis. Residue H122 is part of the active site.

This sequence belongs to the peptidase S14 family. In terms of assembly, fourteen ClpP subunits assemble into 2 heptameric rings which stack back to back to give a disk-like structure with a central cavity, resembling the structure of eukaryotic proteasomes.

It localises to the cytoplasm. The enzyme catalyses Hydrolysis of proteins to small peptides in the presence of ATP and magnesium. alpha-casein is the usual test substrate. In the absence of ATP, only oligopeptides shorter than five residues are hydrolyzed (such as succinyl-Leu-Tyr-|-NHMec, and Leu-Tyr-Leu-|-Tyr-Trp, in which cleavage of the -Tyr-|-Leu- and -Tyr-|-Trp bonds also occurs).. Functionally, cleaves peptides in various proteins in a process that requires ATP hydrolysis. Has a chymotrypsin-like activity. Plays a major role in the degradation of misfolded proteins. In Pelobacter propionicus (strain DSM 2379 / NBRC 103807 / OttBd1), this protein is ATP-dependent Clp protease proteolytic subunit.